Consider the following 1108-residue polypeptide: Eukaryotic translation initiation factor 2-alpha kinase 3 (1108 aa).

The first 27 residues, 1 to 27 (MERATQPRPRALLLLFLLLGCAAGISA), serve as a signal peptide directing secretion. Topologically, residues 28–506 (VARARSLLAP…HYSKNIRKKD (479 aa)) are lumenal. The disordered stretch occupies residues 71–92 (EALPAASGEQESRATESDDDVE). Residue N253 is glycosylated (N-linked (GlcNAc...) asparagine). The chain crosses the membrane as a helical span at residues 507-527 (PILLLHWWKEIFGTILLCIVA). The Cytoplasmic portion of the chain corresponds to 528-1108 (TTFIVRRLFH…SSTFSPLPGN (581 aa)). The disordered stretch occupies residues 542–563 (RQRKESETQCQTESKYDSVSAD). One can recognise a Protein kinase domain in the interval 585 to 1069 (FEPIQCMGRG…ATDIIENAVF (485 aa)). 591–599 (MGRGGFGVV) provides a ligand contact to ATP. Y611 bears the Phosphotyrosine; by autocatalysis mark. An ATP-binding site is contributed by K614. Residues 639–880 (EHPGIVRYFN…SPKVYLYIQM (242 aa)) are insert loop. S707 bears the Phosphoserine mark. Disordered stretches follow at residues 772–818 (DEGH…RMNR) and 832–856 (FKHSSSRSSSEATLSTSPTRPTTLS). Positions 785–798 (SPYTRSREGTSSSI) are enriched in polar residues. Residue T794 is modified to Phosphothreonine. Residues 837–856 (SRSSSEATLSTSPTRPTTLS) show a composition bias toward low complexity. D929 (proton acceptor) is an active-site residue. At T974 the chain carries Phosphothreonine. The tract at residues 1080–1108 (LRQRSRSLSSSGTKHSRQPSSTFSPLPGN) is disordered. S1086 bears the Phosphoserine mark. Residues 1097-1108 (QPSSTFSPLPGN) are compositionally biased toward polar residues.

The protein belongs to the protein kinase superfamily. Ser/Thr protein kinase family. GCN2 subfamily. In terms of assembly, forms dimers with HSPA5/BIP in resting cells. Homotetramerizes in response to endoplasmic reticulum (ER) stress, leading to its activation. Interacts with HSP90B1/GRP94. Interacts with DNAJC3; inhibiting EIF2AK3/PERK activity. Interacts with ATAD3A; ATAD3A and EIF2S1/eIF-2-alpha occupy a common binding site within the cytoplasmic loop of EIF2AK3/PERK, leading to prevent EIF2AK3/PERK association with its substrate EIF2S1/eIF-2-alpha. Interacts with MFN2. Interacts with TMEM33. Interacts with PDIA6. Interacts with LACC1. Oligomerization of the N-terminal ER luminal domain by ER stress promotes EIF2AK3/PERK trans-autophosphorylation of the C-terminal cytoplasmic kinase domain at multiple residues including Thr-974 on the kinase activation loop. Autophosphorylated at Tyr-611 following endoplasmic reticulum stress, leading to activate its activity. Dephosphorylated at Tyr-611 by PTPN1/PTP1B, leading to inactivate its enzyme activity. Phosphorylation at Thr-794 by AKT (AKT1, AKT2 and/or AKT3) inactivates EIF2AK3/PERK. In terms of processing, ADP-ribosylated by PARP16 upon ER stress, which increases kinase activity. As to expression, ubiquitous.

The protein localises to the endoplasmic reticulum membrane. The enzyme catalyses L-seryl-[protein] + ATP = O-phospho-L-seryl-[protein] + ADP + H(+). It carries out the reaction L-threonyl-[protein] + ATP = O-phospho-L-threonyl-[protein] + ADP + H(+). The catalysed reaction is L-tyrosyl-[protein] + ATP = O-phospho-L-tyrosyl-[protein] + ADP + H(+). Inhibited by HSPA5/BIP in absence of stress. Perturbation in protein folding in the endoplasmic reticulum (ER) promotes reversible dissociation from HSPA5/BIP and oligomerization, resulting in trans-autophosphorylation and kinase activity induction. Inactivated following phosphorylation at Thr-794 by AKT (AKT1, AKT2 and/or AKT3). Inhibited by ATAD3A at mitochondria-endoplasmic reticulum contact sites, providing a safe haven for mitochondrial protein translation during ER stress. Its function is as follows. Metabolic-stress sensing protein kinase that phosphorylates the alpha subunit of eukaryotic translation initiation factor 2 (EIF2S1/eIF-2-alpha) in response to various stress, such as unfolded protein response (UPR). Key effector of the integrated stress response (ISR) to unfolded proteins: EIF2AK3/PERK specifically recognizes and binds misfolded proteins, leading to its activation and EIF2S1/eIF-2-alpha phosphorylation. EIF2S1/eIF-2-alpha phosphorylation in response to stress converts EIF2S1/eIF-2-alpha in a global protein synthesis inhibitor, leading to a global attenuation of cap-dependent translation, while concomitantly initiating the preferential translation of ISR-specific mRNAs, such as the transcriptional activators ATF4 and QRICH1, and hence allowing ATF4- and QRICH1-mediated reprogramming. The EIF2AK3/PERK-mediated unfolded protein response increases mitochondrial oxidative phosphorylation by promoting ATF4-mediated expression of COX7A2L/SCAF1, thereby increasing formation of respiratory chain supercomplexes. In contrast to most subcellular compartments, mitochondria are protected from the EIF2AK3/PERK-mediated unfolded protein response due to EIF2AK3/PERK inhibition by ATAD3A at mitochondria-endoplasmic reticulum contact sites. In addition to EIF2S1/eIF-2-alpha, also phosphorylates NFE2L2/NRF2 in response to stress, promoting release of NFE2L2/NRF2 from the BCR(KEAP1) complex, leading to nuclear accumulation and activation of NFE2L2/NRF2. Serves as a critical effector of unfolded protein response (UPR)-induced G1 growth arrest due to the loss of cyclin-D1 (CCND1). Involved in control of mitochondrial morphology and function. The chain is Eukaryotic translation initiation factor 2-alpha kinase 3 (Eif2ak3) from Rattus norvegicus (Rat).